Reading from the N-terminus, the 452-residue chain is UPF0761 membrane protein Bpet3042 (452 aa).

The next 6 membrane-spanning stretches (helical) occupy residues 56 to 76, 114 to 134, 153 to 173, 195 to 215, 225 to 245, and 259 to 279; these read VLGI…FPVF, LTAI…MTID, ALVY…SLWA, AISF…FVVV, ALVG…AFAY, and AFAT…AVLF.

This sequence belongs to the UPF0761 family.

It is found in the cell inner membrane. The chain is UPF0761 membrane protein Bpet3042 from Bordetella petrii (strain ATCC BAA-461 / DSM 12804 / CCUG 43448).